The sequence spans 400 residues: 1-deoxy-D-xylulose 5-phosphate reductoisomerase (400 aa).

Residues Thr10, Gly11, Ser12, Ile13, Gly36, Asn38, and Asn124 each contribute to the NADPH site. Lys125 contacts 1-deoxy-D-xylulose 5-phosphate. Residue Glu126 participates in NADPH binding. Asp150 serves as a coordination point for Mn(2+). 1-deoxy-D-xylulose 5-phosphate is bound by residues Ser151, Glu152, Ser186, and His209. Glu152 serves as a coordination point for Mn(2+). Gly215 is an NADPH binding site. The 1-deoxy-D-xylulose 5-phosphate site is built by Ser222, Asn227, Lys228, and Glu231. Residue Glu231 participates in Mn(2+) binding.

Belongs to the DXR family. The cofactor is Mg(2+). Mn(2+) serves as cofactor.

The catalysed reaction is 2-C-methyl-D-erythritol 4-phosphate + NADP(+) = 1-deoxy-D-xylulose 5-phosphate + NADPH + H(+). The protein operates within isoprenoid biosynthesis; isopentenyl diphosphate biosynthesis via DXP pathway; isopentenyl diphosphate from 1-deoxy-D-xylulose 5-phosphate: step 1/6. Functionally, catalyzes the NADPH-dependent rearrangement and reduction of 1-deoxy-D-xylulose-5-phosphate (DXP) to 2-C-methyl-D-erythritol 4-phosphate (MEP). This is 1-deoxy-D-xylulose 5-phosphate reductoisomerase from Aliivibrio fischeri (strain MJ11) (Vibrio fischeri).